Here is a 211-residue protein sequence, read N- to C-terminus: NADH-quinone oxidoreductase subunit I (211 aa).

The tract at residues proline 21–histidine 41 is disordered. 4Fe-4S ferredoxin-type domains are found at residues leucine 43 to alanine 73 and arginine 89 to aspartate 118. [4Fe-4S] cluster contacts are provided by cysteine 53, cysteine 56, cysteine 59, cysteine 63, cysteine 98, cysteine 101, cysteine 104, and cysteine 108. Residues arginine 141–arginine 211 are disordered. Positions arginine 152–aspartate 166 are enriched in basic and acidic residues. Residues aspartate 179–glycine 191 show a composition bias toward acidic residues. The segment covering glutamate 192–arginine 211 has biased composition (basic and acidic residues).

This sequence belongs to the complex I 23 kDa subunit family. As to quaternary structure, NDH-1 is composed of 14 different subunits. Subunits NuoA, H, J, K, L, M, N constitute the membrane sector of the complex. [4Fe-4S] cluster is required as a cofactor.

The protein localises to the cell membrane. It carries out the reaction a quinone + NADH + 5 H(+)(in) = a quinol + NAD(+) + 4 H(+)(out). In terms of biological role, NDH-1 shuttles electrons from NADH, via FMN and iron-sulfur (Fe-S) centers, to quinones in the respiratory chain. The immediate electron acceptor for the enzyme in this species is believed to be ubiquinone. Couples the redox reaction to proton translocation (for every two electrons transferred, four hydrogen ions are translocated across the cytoplasmic membrane), and thus conserves the redox energy in a proton gradient. The polypeptide is NADH-quinone oxidoreductase subunit I (Parafrankia sp. (strain EAN1pec)).